The sequence spans 138 residues: Large ribosomal subunit protein uL14m (138 aa).

Belongs to the universal ribosomal protein uL14 family. Component of the mitochondrial large ribosomal subunit (mt-LSU). Mature yeast 74S mitochondrial ribosomes consist of a small (37S) and a large (54S) subunit. The 37S small subunit contains a 15S ribosomal RNA (15S mt-rRNA) and 34 different proteins. The 54S large subunit contains a 21S rRNA (21S mt-rRNA) and 46 different proteins.

It is found in the mitochondrion. In terms of biological role, component of the mitochondrial ribosome (mitoribosome), a dedicated translation machinery responsible for the synthesis of mitochondrial genome-encoded proteins, including at least some of the essential transmembrane subunits of the mitochondrial respiratory chain. The mitoribosomes are attached to the mitochondrial inner membrane and translation products are cotranslationally integrated into the membrane. In Saccharomyces cerevisiae (strain ATCC 204508 / S288c) (Baker's yeast), this protein is Large ribosomal subunit protein uL14m (MRPL38).